Consider the following 2209-residue polypeptide: Genome polyprotein (2209 aa).

Gly-2 carries the N-myristoyl glycine; by host lipid modification. The Cytoplasmic segment spans residues Gly-2–Gln-1520. The segment at Gly-580 to Ala-600 is amphipathic alpha-helix. Active-site for protease 2A activity residues include His-901 and Asp-919. Cys-936 and Cys-938 together coordinate Zn(2+). Cys-990 (for protease 2A activity) is an active-site residue. 2 residues coordinate Zn(2+): Cys-996 and His-998. The membrane-binding stretch occupies residues Gly-1128–Gln-1200. Residues Gly-1128 to Thr-1266 are oligomerization. The tract at residues Ser-1149–Ser-1153 is RNA-binding. The region spanning Glu-1232 to Asn-1388 is the SF3 helicase domain. Gly-1256–Ser-1263 is an ATP binding site. Residues Cys-1396, Cys-1399, Cys-1408, and Cys-1413 each coordinate Zn(2+). A C4-type zinc finger spans residues Cys-1396–Cys-1413. Residues Glu-1440–Ile-1447 are RNA-binding. The interval Met-1451 to Gln-1456 is oligomerization. An intramembrane segment occupies Ala-1521–Tyr-1536. Over Lys-1537–Phe-2209 the chain is Cytoplasmic. Residue Tyr-1546 is modified to O-(5'-phospho-RNA)-tyrosine. Residues Gly-1566–Phe-1744 enclose the Peptidase C3 domain. Active-site for protease 3C activity residues include His-1605, Glu-1636, and Cys-1712. Residues Glu-1975–Leu-2090 enclose the RdRp catalytic domain. Mg(2+)-binding residues include Asp-1981 and Asp-2076.

Belongs to the picornaviruses polyprotein family. Interacts with capsid protein VP1 and capsid protein VP3 to form heterotrimeric protomers. As to quaternary structure, interacts with capsid protein VP0, and capsid protein VP3 to form heterotrimeric protomers. Interacts with human PVR. Five protomers subsequently associate to form pentamers which serve as building blocks for the capsid. Interacts with capsid protein VP2, capsid protein VP3 and capsid protein VP4 following cleavage of capsid protein VP0. In terms of assembly, interacts with capsid protein VP1 and capsid protein VP3 in the mature capsid. Interacts with capsid protein VP0 and capsid protein VP1 to form heterotrimeric protomers. Five protomers subsequently associate to form pentamers which serve as building blocks for the capsid. Interacts with capsid protein VP4 in the mature capsid. Interacts with protein 2C; this interaction may be important for virion morphogenesis. As to quaternary structure, interacts with capsid protein VP1 and capsid protein VP3. In terms of assembly, homodimer. Homohexamer; forms a hexameric ring structure with 6-fold symmetry characteristic of AAA+ ATPases. Interacts (via N-terminus) with host RTN3 (via reticulon domain); this interaction is important for viral replication. Interacts with capsid protein VP3; this interaction may be important for virion morphogenesis. As to quaternary structure, interacts with protein 3CD. In terms of assembly, homodimer. Interacts with host GBF1. Interacts (via GOLD domain) with host ACBD3 (via GOLD domain); this interaction allows the formation of a viral protein 3A/ACBD3 heterotetramer with a 2:2 stoichiometry, which will stimulate the recruitment of host PI4KB in order to synthesize PI4P at the viral RNA replication sites. Interacts with RNA-directed RNA polymerase. As to quaternary structure, interacts with protein 3AB and with RNA-directed RNA polymerase. In terms of assembly, interacts with Viral protein genome-linked and with protein 3CD. Requires Mg(2+) as cofactor. Specific enzymatic cleavages in vivo by the viral proteases yield processing intermediates and the mature proteins. In terms of processing, myristoylation is required for the formation of pentamers during virus assembly. Further assembly of 12 pentamers and a molecule of genomic RNA generates the provirion. Post-translationally, during virion maturation, immature virions are rendered infectious following cleavage of VP0 into VP4 and VP2. This maturation seems to be an autocatalytic event triggered by the presence of RNA in the capsid and it is followed by a conformational change infectious virion. Myristoylation is required during RNA encapsidation and formation of the mature virus particle. In terms of processing, VPg is uridylylated by the polymerase into VPg-pUpU. This acts as a nucleotide-peptide primer for the genomic RNA replication.

It is found in the virion. Its subcellular location is the host cytoplasm. It localises to the host cytoplasmic vesicle membrane. The protein localises to the host nucleus. The enzyme catalyses a ribonucleoside 5'-triphosphate + H2O = a ribonucleoside 5'-diphosphate + phosphate + H(+). The catalysed reaction is Selective cleavage of Tyr-|-Gly bond in the picornavirus polyprotein.. It carries out the reaction RNA(n) + a ribonucleoside 5'-triphosphate = RNA(n+1) + diphosphate. It catalyses the reaction Selective cleavage of Gln-|-Gly bond in the poliovirus polyprotein. In other picornavirus reactions Glu may be substituted for Gln, and Ser or Thr for Gly.. Replication or transcription is subject to high level of random mutations by the nucleotide analog ribavirin. Its function is as follows. Forms an icosahedral capsid of pseudo T=3 symmetry with capsid proteins VP2 and VP3. The capsid is 300 Angstroms in diameter, composed of 60 copies of each capsid protein and enclosing the viral positive strand RNA genome. Capsid protein VP1 mainly forms the vertices of the capsid. Capsid protein VP1 interacts with host cell receptor PVR to provide virion attachment to target host cells. This attachment induces virion internalization predominantly through clathrin- and caveolin-independent endocytosis in Hela cells and through caveolin-mediated endocytosis in brain microvascular endothelial cells. Tyrosine kinases are probably involved in the entry process. Virus binding to PVR induces increased junctional permeability and rearrangement of junctional proteins. Modulation of endothelial tight junctions, as well as cytolytic infection of endothelial cells themselves, may result in loss of endothelial integrity which may help the virus to reach the CNS. After binding to its receptor, the capsid undergoes conformational changes. Capsid protein VP1 N-terminus (that contains an amphipathic alpha-helix) and capsid protein VP4 are externalized. Together, they shape a pore in the host membrane through which viral genome is translocated to host cell cytoplasm. In terms of biological role, forms an icosahedral capsid of pseudo T=3 symmetry with capsid proteins VP2 and VP3. The capsid is 300 Angstroms in diameter, composed of 60 copies of each capsid protein and enclosing the viral positive strand RNA genome. Functionally, lies on the inner surface of the capsid shell. After binding to the host receptor, the capsid undergoes conformational changes. Capsid protein VP4 is released, Capsid protein VP1 N-terminus is externalized, and together, they shape a pore in the host membrane through which the viral genome is translocated into the host cell cytoplasm. Component of immature procapsids, which is cleaved into capsid proteins VP4 and VP2 after maturation. Allows the capsid to remain inactive before the maturation step. Its function is as follows. Cysteine protease that cleaves viral polyprotein and specific host proteins. It is responsible for the autocatalytic cleavage between the P1 and P2 regions, which is the first cleavage occurring in the polyprotein. Also cleaves the host translation initiation factor EIF4G1, in order to shut down the capped cellular mRNA translation. Inhibits the host nucleus-cytoplasm protein and RNA trafficking by cleaving host members of the nuclear pores including NUP98, NUP62 and NUP153. Counteracts stress granule formation probably by antagonizing its assembly or promoting its dissassembly. Cleaves and inhibits host IFIH1/MDA5, thereby inhibiting the type-I IFN production and the establishment of the antiviral state. Cleaves and inhibits host MAVS, thereby inhibiting the type-I IFN production and the establishment of the antiviral state. In terms of biological role, plays an essential role in the virus replication cycle by acting as a viroporin. Creates a pore in the host endoplasmic reticulum and as a consequence releases Ca2+ in the cytoplasm of infected cell. In turn, high levels of cytoplasmic calcium may trigger membrane trafficking and transport of viral ER-associated proteins to viroplasms, sites of viral genome replication. Functionally, induces and associates with structural rearrangements of intracellular membranes. Displays RNA-binding, nucleotide binding and NTPase activities. May play a role in virion morphogenesis and viral RNA encapsidation by interacting with the capsid protein VP3. Localizes the viral replication complex to the surface of membranous vesicles. Together with protein 3CD binds the Cis-Active RNA Element (CRE) which is involved in RNA synthesis initiation. Acts as a cofactor to stimulate the activity of 3D polymerase, maybe through a nucleid acid chaperone activity. Its function is as follows. Localizes the viral replication complex to the surface of membranous vesicles. It inhibits host cell endoplasmic reticulum-to-Golgi apparatus transport and causes the disassembly of the Golgi complex, possibly through GBF1 interaction. This would result in depletion of MHC, trail receptors and IFN receptors at the host cell surface. Plays an essential role in viral RNA replication by recruiting ACBD3 and PI4KB at the viral replication sites, thereby allowing the formation of the rearranged membranous structures where viral replication takes place. In terms of biological role, acts as a primer for viral RNA replication and remains covalently bound to viral genomic RNA. VPg is uridylylated prior to priming replication into VPg-pUpU. The oriI viral genomic sequence may act as a template for this. The VPg-pUpU is then used as primer on the genomic RNA poly(A) by the RNA-dependent RNA polymerase to replicate the viral genome. During genome replication, the VPg-RNA linkage is removed by the host TDP2, thereby accelerating replication. During the late stage of the replication cycle, host TDP2 is excluded from sites of viral RNA synthesis and encapsidation, allowing for the generation of progeny virions. Functionally, involved in the viral replication complex and viral polypeptide maturation. It exhibits protease activity with a specificity and catalytic efficiency that is different from protease 3C. Protein 3CD lacks polymerase activity. Protein 3CD binds to the 5'UTR of the viral genome. Major viral protease that mediates proteolytic processing of the polyprotein. Cleaves host EIF5B, contributing to host translation shutoff. Also cleaves host PABPC1, contributing to host translation shutoff. Cleaves host RIGI and thus contributes to the inhibition of type I interferon production. Cleaves host NLRP1, triggers host N-glycine-mediated degradation of the autoinhibitory NLRP1 N-terminal fragment. Inhibits the integrated stress response (ISR) in the infected cell by cleaving host G3BP1. Stress granule formation is thus inhibited, which allows protein synthesis and viral replication. Its function is as follows. Replicates the viral genomic RNA on the surface of intracellular membranes. May form linear arrays of subunits that propagate along a strong head-to-tail interaction called interface-I. Covalently attaches UMP to a tyrosine of VPg, which is used to prime RNA synthesis. The positive stranded RNA genome is first replicated at virus induced membranous vesicles, creating a dsRNA genomic replication form. This dsRNA is then used as template to synthesize positive stranded RNA genomes. ss(+)RNA genomes are either translated, replicated or encapsidated. The sequence is that of Genome polyprotein from Homo sapiens (Human).